The following is a 253-amino-acid chain: Cell division protein ZapD (253 aa).

This sequence belongs to the ZapD family. Interacts with FtsZ.

It localises to the cytoplasm. In terms of biological role, cell division factor that enhances FtsZ-ring assembly. Directly interacts with FtsZ and promotes bundling of FtsZ protofilaments, with a reduction in FtsZ GTPase activity. In Bordetella bronchiseptica (strain ATCC BAA-588 / NCTC 13252 / RB50) (Alcaligenes bronchisepticus), this protein is Cell division protein ZapD.